Here is a 208-residue protein sequence, read N- to C-terminus: dTTP/UTP pyrophosphatase (208 aa).

The Proton acceptor role is filled by aspartate 79.

This sequence belongs to the Maf family. YhdE subfamily. It depends on a divalent metal cation as a cofactor.

It is found in the cytoplasm. It catalyses the reaction dTTP + H2O = dTMP + diphosphate + H(+). It carries out the reaction UTP + H2O = UMP + diphosphate + H(+). Its function is as follows. Nucleoside triphosphate pyrophosphatase that hydrolyzes dTTP and UTP. May have a dual role in cell division arrest and in preventing the incorporation of modified nucleotides into cellular nucleic acids. The protein is dTTP/UTP pyrophosphatase of Mesorhizobium japonicum (strain LMG 29417 / CECT 9101 / MAFF 303099) (Mesorhizobium loti (strain MAFF 303099)).